The primary structure comprises 482 residues: L-propargylglycine--L-glutamate ligase (482 aa).

It carries out the reaction L-propargylglycine + L-glutamate + ATP = L-gamma-glutamyl-L-propargylglycine + ADP + phosphate + H(+). It participates in amino-acid metabolism. Its pathway is antibiotic biosynthesis. Its function is as follows. Involved in the biosynthesis of terminal alkyne-containing amino acids such as L-beta-ethynylserine, that are produced as antibiotics by S.cattleya. Catalyzes the ATP-dependent ligation of L-propargylglycine to L-glutamate to form the dipeptide L-gamma-glutamyl-L-propargylglycine. Is selective for L-propargylglycine over norvaline, allylglycine and the standard proteinogenic amino acids, except L-cysteine which can be used as a substrate to a lesser extent. The protein is L-propargylglycine--L-glutamate ligase of Streptantibioticus cattleyicolor (strain ATCC 35852 / DSM 46488 / JCM 4925 / NBRC 14057 / NRRL 8057) (Streptomyces cattleya).